The following is a 357-amino-acid chain: DNA integrity scanning protein DisA (357 aa).

Residues 8–146 form the DAC domain; sequence VKSMINILQL…GNLRYTLKDI (139 aa). Residues G75, L93, and 106-110 each bind ATP; that span reads MRHRT.

The protein belongs to the DisA family. In terms of assembly, homooctamer. It depends on Mg(2+) as a cofactor.

It catalyses the reaction 2 ATP = 3',3'-c-di-AMP + 2 diphosphate. Its function is as follows. Participates in a DNA-damage check-point that is active prior to asymmetric division when DNA is damaged. DisA forms globular foci that rapidly scan along the chromosomes during sporulation, searching for lesions. When a lesion is present, DisA pauses at the lesion site. This triggers a cellular response that culminates in a temporary block in sporulation initiation. In terms of biological role, also has diadenylate cyclase activity, catalyzing the condensation of 2 ATP molecules into cyclic di-AMP (c-di-AMP). c-di-AMP acts as a signaling molecule that couples DNA integrity with progression of sporulation. The rise in c-di-AMP level generated by DisA while scanning the chromosome, operates as a positive signal that advances sporulation; upon encountering a lesion, the DisA focus arrests at the damaged site and halts c-di-AMP synthesis. This Bacillus cereus (strain ATCC 14579 / DSM 31 / CCUG 7414 / JCM 2152 / NBRC 15305 / NCIMB 9373 / NCTC 2599 / NRRL B-3711) protein is DNA integrity scanning protein DisA.